A 60-amino-acid chain; its full sequence is Large ribosomal subunit protein uL30 (60 aa).

This sequence belongs to the universal ribosomal protein uL30 family. In terms of assembly, part of the 50S ribosomal subunit.

The chain is Large ribosomal subunit protein uL30 from Cupriavidus metallidurans (strain ATCC 43123 / DSM 2839 / NBRC 102507 / CH34) (Ralstonia metallidurans).